The chain runs to 340 residues: N-acetyl-gamma-glutamyl-phosphate reductase (340 aa).

Residue Cys146 is part of the active site.

The protein belongs to the NAGSA dehydrogenase family. Type 1 subfamily.

The protein localises to the cytoplasm. It catalyses the reaction N-acetyl-L-glutamate 5-semialdehyde + phosphate + NADP(+) = N-acetyl-L-glutamyl 5-phosphate + NADPH + H(+). The protein operates within amino-acid biosynthesis; L-arginine biosynthesis; N(2)-acetyl-L-ornithine from L-glutamate: step 3/4. In terms of biological role, catalyzes the NADPH-dependent reduction of N-acetyl-5-glutamyl phosphate to yield N-acetyl-L-glutamate 5-semialdehyde. The chain is N-acetyl-gamma-glutamyl-phosphate reductase from Rubrobacter xylanophilus (strain DSM 9941 / JCM 11954 / NBRC 16129 / PRD-1).